Reading from the N-terminus, the 268-residue chain is MKYARVRTHGGVSIISAFIDGMGGAFSIDVPMTVTVREGTCSEEKKISEDIRRYLSIATCFRFTVDSRIPSGYGLKSSSAYILALAKAMAVYSGIDISDMEIMTASADISKNSGLSMTGALDDLCQAMYGGYCLTDNRKMKILRRGRLPEMPVLVCADGDKRSSGKVSIEGHFTNAIRRVEDLAFKGRIFDAAVANGLIYGSIFGMDLRLIGSMLKAGALYSSQSGKGPAIFGIFADRRSAMNARSDIGFGIVTKINNQGIRYWKYDS.

An ATP-binding site is contributed by 70-80 (PSGYGLKSSSA).

The protein belongs to the GHMP kinase family. Archaeal shikimate kinase subfamily.

It localises to the cytoplasm. It catalyses the reaction shikimate + ATP = 3-phosphoshikimate + ADP + H(+). Its pathway is metabolic intermediate biosynthesis; chorismate biosynthesis; chorismate from D-erythrose 4-phosphate and phosphoenolpyruvate: step 5/7. This Thermoplasma acidophilum (strain ATCC 25905 / DSM 1728 / JCM 9062 / NBRC 15155 / AMRC-C165) protein is Shikimate kinase (aroK).